A 409-amino-acid chain; its full sequence is Glycinol 4-dimethylallyltransferase (409 aa).

The N-terminal 44 residues, 1 to 44, are a transit peptide targeting the chloroplast; the sequence is MDWGLAISSHPKPYSVTTGGNLWRSKHTTKNIYFASSWISKASR. 9 consecutive transmembrane segments (helical) span residues 113 to 133, 148 to 168, 200 to 220, 222 to 242, 249 to 269, 287 to 307, 330 to 350, 354 to 374, and 388 to 408; these read LSAF…LCAF, LSFL…EIYL, VIIS…TGSW, LICN…DVPL, PFVA…ISYF, LGFL…SKDI, AFWI…LAGA, HFWT…ILWY, and GSFY…MALI.

The protein belongs to the UbiA prenyltransferase family. It depends on Mg(2+) as a cofactor. Mn(2+) serves as cofactor. Requires Co(2+) as cofactor.

The protein localises to the plastid. The protein resides in the chloroplast membrane. The catalysed reaction is (6aS,11aS)-3,6a,9-trihydroxypterocarpan + dimethylallyl diphosphate = (6aS,11aS)-2-dimethylallyl-3,6a,9-trihydroxypterocarpan + diphosphate. It carries out the reaction (6aS,11aS)-3,6a,9-trihydroxypterocarpan + dimethylallyl diphosphate = (6aS,11aS)-4-dimethylallyl-3,6a,9-trihydroxypterocarpan + diphosphate. Its pathway is phytoalexin biosynthesis; pterocarpan phytoalexin biosynthesis. Proposed to be involved in the biosynthesis of pterocarpan phytoalexins, specifically glyceollins. Can act as a prenyltransferase towards glycinol which is the direct precursor of glyceollins. Seems to be specific for prenylation at C-4 thus producing glyceollin I. In Glycine max (Soybean), this protein is Glycinol 4-dimethylallyltransferase (G4DT).